Reading from the N-terminus, the 445-residue chain is Chromosome partition protein MukF (445 aa).

The leucine-zipper stretch occupies residues Leu-213–Ile-241.

The protein belongs to the MukF family. As to quaternary structure, interacts, and probably forms a ternary complex, with MukE and MukB via its C-terminal region. The complex formation is stimulated by calcium or magnesium. It is required for an interaction between MukE and MukB.

It is found in the cytoplasm. Its subcellular location is the nucleoid. In terms of biological role, involved in chromosome condensation, segregation and cell cycle progression. May participate in facilitating chromosome segregation by condensation DNA from both sides of a centrally located replisome during cell division. Not required for mini-F plasmid partitioning. Probably acts via its interaction with MukB and MukE. Overexpression results in anucleate cells. It has a calcium binding activity. This chain is Chromosome partition protein MukF, found in Vibrio campbellii (strain ATCC BAA-1116).